The primary structure comprises 224 residues: MGYSKTLVAGLFAMLLLAPAVLATDPDPLQDFCVADLDGKAVSVNGHTCKPMSEAGDDFLFSSKLAKAGNTSTPNGSAVTELDVAEWPGTNTLGVSMNRVDFAPGGTNPPHIHPRATEIGIVMKGELLVGILGSLDSGNKLYSRVVRAGETFLIPRGLMHFQFNVGKTEASMVVSFNSQNPGIVFVPLTLFGSNPPIPTPVLTKALRVEARVVELLKSKFAAGF.

The signal sequence occupies residues 1–23 (MGYSKTLVAGLFAMLLLAPAVLA). A disulfide bond links Cys-33 and Cys-49. The region spanning 63-214 (SKLAKAGNTS…ALRVEARVVE (152 aa)) is the Cupin type-1 domain. Asn-70 and Asn-75 each carry an N-linked (GlcNAc...) asparagine glycan. Positions 111, 113, 118, and 160 each coordinate Mn(2+).

It belongs to the germin family. As to quaternary structure, oligomer (believed to be a pentamer but probably hexamer).

The protein localises to the secreted. It is found in the extracellular space. It localises to the apoplast. Its subcellular location is the cytoplasm. The protein resides in the cell wall. The enzyme catalyses oxalate + O2 + 2 H(+) = H2O2 + 2 CO2. In terms of biological role, produces developmental and stress-related release of hydrogen peroxide in the apoplast. May play an important role in several aspects of plant growth and defense mechanisms. This Triticum aestivum (Wheat) protein is Oxalate oxidase GF-2.8.